We begin with the raw amino-acid sequence, 2620 residues long: Ankyrin repeat and KH domain-containing protein mask-1 (2620 aa).

ANK repeat units lie at residues 254-283 (SKIT…DPNV), 288-318 (NCNT…KKPD), 361-390 (ERDS…KNPP), 402-431 (ERYS…PADL), 437-466 (IEPS…KIEE), 470-502 (KKNT…EVDV), 507-536 (TGDT…DLTA), 538-566 (KTSP…TIPQ), 568-597 (QLSR…DLNF), 600-629 (DERT…SVNF), 634-663 (NDAT…DPML), and 667-697 (DGVN…NMPM). 3 disordered regions span residues 699 to 726 (KDPP…SGQD), 994 to 1032 (HQEE…QPGA), and 1192 to 1229 (SLMA…AIDK). The segment covering 1012–1029 (TSLTAPNPADTSDVTTKQ) has biased composition (polar residues). A compositionally biased stretch (low complexity) spans 1192 to 1206 (SLMAKSVQSQQQQGQ). Over residues 1210-1221 (THSEGDGAERAK) the composition is skewed to basic and acidic residues. 10 ANK repeats span residues 1234-1263 (TLET…NIEH), 1267-1296 (KGFS…AIEA), 1301-1330 (TKDT…NKEH), 1334-1363 (SDYT…EINS), 1369-1398 (LGIS…DINA), 1403-1432 (NRNT…NVEH), 1436-1465 (TGLT…DTNA), 1471-1500 (TKDT…AVDV), 1504-1533 (KGCT…DPDM), and 1537-1566 (RKIS…QFPN). Residues 1596–1648 (AKKAQAESAELAAQKLLELIDEEKVQKEVKKQKQKDKKIKKKEEKKIKKQEAE) are a coiled coil. Disordered stretches follow at residues 1621-1720 (QKEV…AEEP) and 1759-1804 (KEGK…EIDT). Residues 1636–1647 (KKEEKKIKKQEA) show a composition bias toward basic and acidic residues. Over residues 1648 to 1661 (EPEPEPEPEPEPVP) the composition is skewed to acidic residues. Composition is skewed to low complexity over residues 1665–1681 (PVVI…IVVE) and 1769–1791 (KSGY…TTSS). The KH domain occupies 1807-1873 (ESSWKLTIPA…EMVRYAMNII (67 aa)). A compositionally biased stretch (polar residues) spans 1899-1913 (ASSFSSEGTSKSAVD). Disordered stretches follow at residues 1899–1962 (ASSF…GNVW), 1976–2010 (LMET…QASE), 2067–2143 (SVQS…QTQN), 2267–2294 (NATS…VTTG), 2307–2343 (SFAP…QQQQ), 2372–2391 (QHQS…KFSM), 2429–2448 (QESS…NSYY), and 2496–2620 (QKKQ…SSNW). Residues 1917 to 1946 (APSSIPKSLSSASIARQSASPIPQQSSQRS) are compositionally biased toward low complexity. Over residues 1982 to 1993 (ISQSPKQAPQIP) the composition is skewed to polar residues. Composition is skewed to low complexity over residues 1994–2006 (STQQ…SRQD), 2067–2078 (SVQSVQHMQQQQ), and 2100–2118 (SQPI…SSFS). Composition is skewed to polar residues over residues 2267–2286 (NATS…VQQP) and 2325–2339 (RSQS…STNI). The segment covering 2505 to 2528 (SFMHNSQQPQPFGAPSNASANQSR) has biased composition (polar residues). Positions 2535 to 2547 (RPQPPPFVAPQAP) are enriched in pro residues. Residues 2552-2565 (SLGNASSTTNPSRT) show a composition bias toward polar residues. Low complexity-rich tracts occupy residues 2566 to 2588 (SMQQ…QMPQ) and 2597 to 2620 (QQQQ…SSNW).

The protein belongs to the mask family.

It localises to the cytoplasm. The chain is Ankyrin repeat and KH domain-containing protein mask-1 from Caenorhabditis elegans.